The following is a 643-amino-acid chain: Phosphomethylpyrimidine synthase (643 aa).

Residues Asn-248, Met-277, Tyr-306, His-342, 362–364, 403–406, and Glu-442 contribute to the substrate site; these read SRG and DGLR. Position 446 (His-446) interacts with Zn(2+). Residue Tyr-469 coordinates substrate. Zn(2+) is bound at residue His-510. [4Fe-4S] cluster-binding residues include Cys-590, Cys-593, and Cys-598.

The protein belongs to the ThiC family. In terms of assembly, homodimer. [4Fe-4S] cluster is required as a cofactor.

It catalyses the reaction 5-amino-1-(5-phospho-beta-D-ribosyl)imidazole + S-adenosyl-L-methionine = 4-amino-2-methyl-5-(phosphooxymethyl)pyrimidine + CO + 5'-deoxyadenosine + formate + L-methionine + 3 H(+). Its pathway is cofactor biosynthesis; thiamine diphosphate biosynthesis. In terms of biological role, catalyzes the synthesis of the hydroxymethylpyrimidine phosphate (HMP-P) moiety of thiamine from aminoimidazole ribotide (AIR) in a radical S-adenosyl-L-methionine (SAM)-dependent reaction. The protein is Phosphomethylpyrimidine synthase of Burkholderia mallei (strain NCTC 10247).